The sequence spans 264 residues: Thymidylate synthase (264 aa).

Arg-21 contacts dUMP. His-51 provides a ligand contact to (6R)-5,10-methylene-5,6,7,8-tetrahydrofolate. Position 126-127 (126-127 (RR)) interacts with dUMP. The active-site Nucleophile is the Cys-146. DUMP-binding positions include 166–169 (RSCD), Asn-177, and 207–209 (HLY). Asp-169 contributes to the (6R)-5,10-methylene-5,6,7,8-tetrahydrofolate binding site. Ser-263 provides a ligand contact to (6R)-5,10-methylene-5,6,7,8-tetrahydrofolate.

The protein belongs to the thymidylate synthase family. Bacterial-type ThyA subfamily. Homodimer.

It is found in the cytoplasm. The enzyme catalyses dUMP + (6R)-5,10-methylene-5,6,7,8-tetrahydrofolate = 7,8-dihydrofolate + dTMP. It participates in pyrimidine metabolism; dTTP biosynthesis. In terms of biological role, catalyzes the reductive methylation of 2'-deoxyuridine-5'-monophosphate (dUMP) to 2'-deoxythymidine-5'-monophosphate (dTMP) while utilizing 5,10-methylenetetrahydrofolate (mTHF) as the methyl donor and reductant in the reaction, yielding dihydrofolate (DHF) as a by-product. This enzymatic reaction provides an intracellular de novo source of dTMP, an essential precursor for DNA biosynthesis. This is Thymidylate synthase from Wigglesworthia glossinidia brevipalpis.